Consider the following 545-residue polypeptide: Membrane protein insertase YidC (545 aa).

A run of 4 helical transmembrane segments spans residues 350–370 (IIGN…AVLY), 424–444 (LPML…FASV), 461–481 (ADPY…QTYL), and 498–518 (PLVF…YWVI).

The protein belongs to the OXA1/ALB3/YidC family. Type 1 subfamily. In terms of assembly, interacts with the Sec translocase complex via SecD. Specifically interacts with transmembrane segments of nascent integral membrane proteins during membrane integration.

The protein localises to the cell inner membrane. Required for the insertion and/or proper folding and/or complex formation of integral membrane proteins into the membrane. Involved in integration of membrane proteins that insert both dependently and independently of the Sec translocase complex, as well as at least some lipoproteins. Aids folding of multispanning membrane proteins. The chain is Membrane protein insertase YidC from Neisseria meningitidis serogroup A / serotype 4A (strain DSM 15465 / Z2491).